The following is a 190-amino-acid chain: Vascular endothelial growth factor A (190 aa).

The signal sequence occupies residues 1–26 (MNFLLSWVHWSLALLLYLHHAKWSQA). 3 disulfides stabilise this stretch: Cys51–Cys93, Cys82–Cys127, and Cys86–Cys129. A glycan (N-linked (GlcNAc...) asparagine) is linked at Asn100.

This sequence belongs to the PDGF/VEGF growth factor family. In terms of assembly, homodimer; disulfide-linked. Also found as heterodimer with PGF. Interacts with NRP1. Interacts with isoform 2 of BSG. Interacts with CD82; this interaction inhibits VEGFA-mediated signaling pathway.

Its subcellular location is the secreted. In terms of biological role, growth factor active in angiogenesis, vasculogenesis and endothelial cell growth. Induces endothelial cell proliferation, promotes cell migration, inhibits apoptosis and induces permeabilization of blood vessels. Binds to the FLT1/VEGFR1 and KDR/VEGFR2 receptors, heparan sulfate and heparin. Binding to NRP1 receptor initiates a signaling pathway needed for motor neuron axon guidance and cell body migration, including for the caudal migration of facial motor neurons from rhombomere 4 to rhombomere 6 during embryonic development. Also binds the DEAR/FBXW7-AS1 receptor. The polypeptide is Vascular endothelial growth factor A (VEGFA) (Equus caballus (Horse)).